The sequence spans 301 residues: GLABROUS1 enhancer-binding protein-like 2 (301 aa).

The interval 1–62 (MATPTELGFS…NTKMASPPSN (62 aa)) is disordered. A compositionally biased stretch (basic residues) spans 44–54 (KKKKKKTKHNT). The segment at 268–289 (LSNEWKALCVEELKLNINKLRF) is non-canonical leucine-zipper.

This sequence belongs to the GeBP family. As to quaternary structure, homo- and heterodimers. Interacts with GEBP, GPL1 and GPL3. As to expression, expressed in the apical meristem and young leaf primordia. Detected in the vascular tissues of cotyledons and leaves, in hydathodes and in the septun of siliques, but not in roots.

Its subcellular location is the nucleus. Functionally, probable transcription factor. May play redundant roles with GEBP and GPL1 in cytokinin responses by regulating the transcript levels of type-A ARR response genes. Involved in stress responses. Plays a repressive role in cell expansion by counteracting the positive role of CPR5 in this process, but does not regulate cell proliferation or endoreduplication. In Arabidopsis thaliana (Mouse-ear cress), this protein is GLABROUS1 enhancer-binding protein-like 2.